Consider the following 404-residue polypeptide: Probable tRNA sulfurtransferase (404 aa).

The THUMP domain maps to 60 to 165; the sequence is QPIVEALKLV…DEAAYISYEE (106 aa). ATP is bound by residues 183-184, 208-209, arginine 265, glycine 287, and glutamine 296; these read ML and HF.

The protein belongs to the ThiI family.

Its subcellular location is the cytoplasm. It catalyses the reaction [ThiI sulfur-carrier protein]-S-sulfanyl-L-cysteine + a uridine in tRNA + 2 reduced [2Fe-2S]-[ferredoxin] + ATP + H(+) = [ThiI sulfur-carrier protein]-L-cysteine + a 4-thiouridine in tRNA + 2 oxidized [2Fe-2S]-[ferredoxin] + AMP + diphosphate. It carries out the reaction [ThiS sulfur-carrier protein]-C-terminal Gly-Gly-AMP + S-sulfanyl-L-cysteinyl-[cysteine desulfurase] + AH2 = [ThiS sulfur-carrier protein]-C-terminal-Gly-aminoethanethioate + L-cysteinyl-[cysteine desulfurase] + A + AMP + 2 H(+). It functions in the pathway cofactor biosynthesis; thiamine diphosphate biosynthesis. Functionally, catalyzes the ATP-dependent transfer of a sulfur to tRNA to produce 4-thiouridine in position 8 of tRNAs, which functions as a near-UV photosensor. Also catalyzes the transfer of sulfur to the sulfur carrier protein ThiS, forming ThiS-thiocarboxylate. This is a step in the synthesis of thiazole, in the thiamine biosynthesis pathway. The sulfur is donated as persulfide by IscS. This chain is Probable tRNA sulfurtransferase, found in Streptococcus pyogenes serotype M3 (strain ATCC BAA-595 / MGAS315).